A 278-amino-acid chain; its full sequence is Pantothenate synthetase (278 aa).

27–34 (MGYLHEGH) serves as a coordination point for ATP. Residue H34 is the Proton donor of the active site. Q58 is a (R)-pantoate binding site. Q58 lines the beta-alanine pocket. 144 to 147 (GQKD) is a binding site for ATP. Q150 serves as a coordination point for (R)-pantoate. ATP is bound by residues V173 and 181–184 (MSSR).

The protein belongs to the pantothenate synthetase family. In terms of assembly, homodimer.

It localises to the cytoplasm. It catalyses the reaction (R)-pantoate + beta-alanine + ATP = (R)-pantothenate + AMP + diphosphate + H(+). Its pathway is cofactor biosynthesis; (R)-pantothenate biosynthesis; (R)-pantothenate from (R)-pantoate and beta-alanine: step 1/1. Functionally, catalyzes the condensation of pantoate with beta-alanine in an ATP-dependent reaction via a pantoyl-adenylate intermediate. In Roseiflexus castenholzii (strain DSM 13941 / HLO8), this protein is Pantothenate synthetase.